Consider the following 276-residue polypeptide: Formamidopyrimidine-DNA glycosylase (276 aa).

The Schiff-base intermediate with DNA role is filled by Pro2. The Proton donor role is filled by Glu3. Lys60 functions as the Proton donor; for beta-elimination activity in the catalytic mechanism. His93 and Arg112 together coordinate DNA. The FPG-type zinc-finger motif lies at 240 to 274 (NVYGKKGEPCVTCGTILEKTVVGGRGTHYCPICQP). Arg264 acts as the Proton donor; for delta-elimination activity in catalysis.

The protein belongs to the FPG family. In terms of assembly, monomer. Requires Zn(2+) as cofactor.

The enzyme catalyses Hydrolysis of DNA containing ring-opened 7-methylguanine residues, releasing 2,6-diamino-4-hydroxy-5-(N-methyl)formamidopyrimidine.. It catalyses the reaction 2'-deoxyribonucleotide-(2'-deoxyribose 5'-phosphate)-2'-deoxyribonucleotide-DNA = a 3'-end 2'-deoxyribonucleotide-(2,3-dehydro-2,3-deoxyribose 5'-phosphate)-DNA + a 5'-end 5'-phospho-2'-deoxyribonucleoside-DNA + H(+). In terms of biological role, involved in base excision repair of DNA damaged by oxidation or by mutagenic agents. Acts as a DNA glycosylase that recognizes and removes damaged bases. Has a preference for oxidized purines, such as 7,8-dihydro-8-oxoguanine (8-oxoG). Has AP (apurinic/apyrimidinic) lyase activity and introduces nicks in the DNA strand. Cleaves the DNA backbone by beta-delta elimination to generate a single-strand break at the site of the removed base with both 3'- and 5'-phosphates. This Bacillus cereus (strain ATCC 14579 / DSM 31 / CCUG 7414 / JCM 2152 / NBRC 15305 / NCIMB 9373 / NCTC 2599 / NRRL B-3711) protein is Formamidopyrimidine-DNA glycosylase.